The sequence spans 310 residues: Cysteine synthase (310 aa).

An N6-(pyridoxal phosphate)lysine modification is found at lysine 46. Residues asparagine 76, 180–184, and serine 268 each bind pyridoxal 5'-phosphate; that span reads GTGGT.

Belongs to the cysteine synthase/cystathionine beta-synthase family. Homodimer. Pyridoxal 5'-phosphate serves as cofactor.

It catalyses the reaction O-acetyl-L-serine + hydrogen sulfide = L-cysteine + acetate. It participates in amino-acid biosynthesis; L-cysteine biosynthesis; L-cysteine from L-serine: step 2/2. This is Cysteine synthase (cysK) from Staphylococcus aureus (strain Mu50 / ATCC 700699).